We begin with the raw amino-acid sequence, 120 residues long: NAD(P)H-quinone oxidoreductase subunit 3, chloroplastic (120 aa).

The next 3 membrane-spanning stretches (helical) occupy residues 9 to 29, 64 to 84, and 88 to 108; these read IFWA…LISG, MFAL…PWAM, and VLGV…IVGS.

Belongs to the complex I subunit 3 family. As to quaternary structure, NDH is composed of at least 16 different subunits, 5 of which are encoded in the nucleus.

It is found in the plastid. The protein localises to the chloroplast thylakoid membrane. The enzyme catalyses a plastoquinone + NADH + (n+1) H(+)(in) = a plastoquinol + NAD(+) + n H(+)(out). It catalyses the reaction a plastoquinone + NADPH + (n+1) H(+)(in) = a plastoquinol + NADP(+) + n H(+)(out). NDH shuttles electrons from NAD(P)H:plastoquinone, via FMN and iron-sulfur (Fe-S) centers, to quinones in the photosynthetic chain and possibly in a chloroplast respiratory chain. The immediate electron acceptor for the enzyme in this species is believed to be plastoquinone. Couples the redox reaction to proton translocation, and thus conserves the redox energy in a proton gradient. The polypeptide is NAD(P)H-quinone oxidoreductase subunit 3, chloroplastic (Illicium oligandrum (Star anise)).